A 420-amino-acid chain; its full sequence is Zinc finger and BTB domain-containing protein 42 (420 aa).

The 69-residue stretch at 24–92 (CDCTVLVGDA…MYEGRLDLHN (69 aa)) folds into the BTB domain. Disordered stretches follow at residues 127 to 204 (TRTL…HPPC) and 222 to 247 (VKAE…PPPV). Positions 227-241 (DSFSEQDSSSPQSAD) are enriched in low complexity. 4 C2H2-type zinc fingers span residues 292-314 (CICP…LSAH), 332-354 (PTCP…ERTH), 360-382 (YTCV…AVVH), and 388-411 (HACR…RKFH).

Belongs to the krueppel C2H2-type zinc-finger protein family. ZBTB18 subfamily. As to expression, highly expressed in skeletal muscle and ovary (at protein level). Low expression in brain, lung, spleen, liver and heart (at protein level). Not detected in kidney and intestines (at protein level). Also observed in testis and, at lower levels, in stomach and nervous system.

The protein localises to the cytoplasm. The protein resides in the nucleus. Its subcellular location is the nucleoplasm. Functionally, transcriptional repressor. Specifically binds DNA and probably acts by recruiting chromatin remodeling multiprotein complexes. This chain is Zinc finger and BTB domain-containing protein 42 (Zbtb42), found in Mus musculus (Mouse).